A 626-amino-acid chain; its full sequence is Glycosyltransferase 25 family member (626 aa).

The signal sequence occupies residues 1–21 (MLKKQVFYGILLICAFVCIYG). Asparagine 113, asparagine 234, asparagine 272, and asparagine 533 each carry an N-linked (GlcNAc...) asparagine glycan. Residues 623–626 (HQEL) carry the Prevents secretion from ER motif.

The protein belongs to the glycosyltransferase 25 family.

Its subcellular location is the endoplasmic reticulum lumen. The polypeptide is Glycosyltransferase 25 family member (Drosophila pseudoobscura pseudoobscura (Fruit fly)).